The chain runs to 870 residues: DNA mismatch repair protein MutS (870 aa).

620–627 (GPNMAGKS) serves as a coordination point for ATP.

This sequence belongs to the DNA mismatch repair MutS family.

Its function is as follows. This protein is involved in the repair of mismatches in DNA. It is possible that it carries out the mismatch recognition step. This protein has a weak ATPase activity. The chain is DNA mismatch repair protein MutS from Acetivibrio thermocellus (strain ATCC 27405 / DSM 1237 / JCM 9322 / NBRC 103400 / NCIMB 10682 / NRRL B-4536 / VPI 7372) (Clostridium thermocellum).